The following is a 154-amino-acid chain: Aspartate carbamoyltransferase regulatory chain (154 aa).

Zn(2+) is bound by residues Cys109, Cys114, Cys138, and Cys141.

This sequence belongs to the PyrI family. In terms of assembly, contains catalytic and regulatory chains. The cofactor is Zn(2+).

Involved in allosteric regulation of aspartate carbamoyltransferase. This Yersinia pseudotuberculosis serotype O:1b (strain IP 31758) protein is Aspartate carbamoyltransferase regulatory chain.